Reading from the N-terminus, the 84-residue chain is Small ribosomal subunit protein bS16c (84 aa).

The protein belongs to the bacterial ribosomal protein bS16 family.

The protein resides in the plastid. The protein localises to the chloroplast. This Mesostigma viride (Green alga) protein is Small ribosomal subunit protein bS16c.